A 723-amino-acid chain; its full sequence is Enolase-phosphatase E1 (723 aa).

Substrate contacts are provided by residues S126–S127 and K160. Residues G239–S723 form a disordered region. 2 stretches are compositionally biased toward basic and acidic residues: residues V262–A284 and A293–V308. Residues A311 to D320 are compositionally biased toward low complexity. Composition is skewed to basic and acidic residues over residues A322–E406, A419–E443, E468–A479, T487–A496, S511–E565, and V577–A593. Low complexity-rich tracts occupy residues V596–E606 and N636–V647. The segment covering G653–D666 has biased composition (basic and acidic residues).

It belongs to the HAD-like hydrolase superfamily. MasA/MtnC family. Monomer.

The protein resides in the cytoplasm. The protein localises to the nucleus. It carries out the reaction 5-methylsulfanyl-2,3-dioxopentyl phosphate + H2O = 1,2-dihydroxy-5-(methylsulfanyl)pent-1-en-3-one + phosphate. It participates in amino-acid biosynthesis; L-methionine biosynthesis via salvage pathway; L-methionine from S-methyl-5-thio-alpha-D-ribose 1-phosphate: step 3/6. It functions in the pathway amino-acid biosynthesis; L-methionine biosynthesis via salvage pathway; L-methionine from S-methyl-5-thio-alpha-D-ribose 1-phosphate: step 4/6. Its function is as follows. Bifunctional enzyme that catalyzes the enolization of 2,3-diketo-5-methylthiopentyl-1-phosphate (DK-MTP-1-P) into the intermediate 2-hydroxy-3-keto-5-methylthiopentenyl-1-phosphate (HK-MTPenyl-1-P), which is then dephosphorylated to form the acireductone 1,2-dihydroxy-3-keto-5-methylthiopentene (DHK-MTPene). The chain is Enolase-phosphatase E1 from Culex quinquefasciatus (Southern house mosquito).